The chain runs to 864 residues: DNA mismatch repair protein MutS (864 aa).

613 to 620 serves as a coordination point for ATP; that stretch reads GPNMGGKS.

This sequence belongs to the DNA mismatch repair MutS family.

Functionally, this protein is involved in the repair of mismatches in DNA. It is possible that it carries out the mismatch recognition step. This protein has a weak ATPase activity. This chain is DNA mismatch repair protein MutS, found in Actinobacillus pleuropneumoniae serotype 7 (strain AP76).